Consider the following 648-residue polypeptide: Serine/threonine-protein kinase DCLK3 (648 aa).

Disordered regions lie at residues 86–127 (DDRA…HLGV) and 150–345 (QSLE…PRPM). Basic and acidic residues-rich tracts occupy residues 98–127 (GKWE…HLGV), 213–234 (ELRR…DQES), 255–266 (EGLREVKKDTRP), 277–303 (LREH…EKKP), and 312–338 (TLRD…ERPS). The Protein kinase domain maps to 356–613 (YETGRVIGDG…AHQVLQHPWI (258 aa)). Residues 362–370 (IGDGNFAVV) and lysine 385 each bind ATP. Aspartate 477 serves as the catalytic Proton acceptor. Positions 628–648 (VSPSSEGHFRSQHKRVVEQVS) are disordered.

It belongs to the protein kinase superfamily. CAMK Ser/Thr protein kinase family. CaMK subfamily.

The protein resides in the cytoplasm. Its subcellular location is the nucleus. It carries out the reaction L-seryl-[protein] + ATP = O-phospho-L-seryl-[protein] + ADP + H(+). It catalyses the reaction L-threonyl-[protein] + ATP = O-phospho-L-threonyl-[protein] + ADP + H(+). The protein is Serine/threonine-protein kinase DCLK3 (DCLK3) of Homo sapiens (Human).